The chain runs to 119 residues: MIIGHGIDLQDIAAVQRAHERSSRFASKVLTFKELEIFTSLKGRRQVEYLAGRWAAKEAFSKAYGSGIGSLRFQDLEILANNKGAPIFTKSPFSGNIFISISHSKNYVEASVILEENNL.

Asp-8 and Glu-58 together coordinate Mg(2+).

It belongs to the P-Pant transferase superfamily. AcpS family. It depends on Mg(2+) as a cofactor.

Its subcellular location is the cytoplasm. It catalyses the reaction apo-[ACP] + CoA = holo-[ACP] + adenosine 3',5'-bisphosphate + H(+). Its function is as follows. Transfers the 4'-phosphopantetheine moiety from coenzyme A to a Ser of acyl-carrier-protein. This is Holo-[acyl-carrier-protein] synthase from Streptococcus mutans serotype c (strain ATCC 700610 / UA159).